Consider the following 525-residue polypeptide: Sensory neuron membrane protein 1 (525 aa).

Residues 1–11 lie on the Cytoplasmic side of the membrane; sequence MLLPKPLKYAA. The helical transmembrane segment at 12 to 32 threads the bilayer; sequence IGGGVFVFGILIGWVIFPVIL. Over 33 to 456 the chain is Extracellular; the sequence is KSQIKKEMAL…LKHQLFIPKR (424 aa). N-linked (GlcNAc...) asparagine glycans are attached at residues asparagine 67, asparagine 105, and asparagine 229. 3 disulfide bridges follow: cysteine 268/cysteine 333, cysteine 297/cysteine 352, and cysteine 335/cysteine 341. N-linked (GlcNAc...) asparagine glycosylation is present at asparagine 440. Residues 457–477 traverse the membrane as a helical segment; the sequence is IVGVIRWWMVSFGLIAVLAGV. The Cytoplasmic portion of the chain corresponds to 478–525; it reads MYHFKDNIMGWAAKGESTTAKVNPEDGSNEQRGVSVIGQDREPPKVTM. The segment at 496 to 525 is disordered; sequence TAKVNPEDGSNEQRGVSVIGQDREPPKVTM. A compositionally biased stretch (basic and acidic residues) spans 516-525; sequence QDREPPKVTM.

This sequence belongs to the CD36 family. In terms of tissue distribution, principal component of the olfactory cilia membrane. Localizes to the somata, dendritic neck and cilia of the olfactory neurons (at protein level). Not detected in the axons of ORNs, the cytoplasm of auxiliary cells or non-sensory structures. Expression is universal among ORNs but differential between neuron and sensillum types.

It localises to the cell membrane. Plays an olfactory role that is not restricted to pheromone sensitivity. May be involved in the odor detection properties of the olfactory receptor neurons (ORNs) rather than their differentiation and growth. This is Sensory neuron membrane protein 1 from Antheraea polyphemus (Polyphemus moth).